A 361-amino-acid chain; its full sequence is D-amino-acid oxidase (361 aa).

The first 22 residues, 1–22 (MSNTIVVVGAGVIGLTSALLLS), serve as a signal peptide directing secretion. FAD contacts are provided by Ala-10, Ile-13, Lys-34, His-35, Ala-45, Ser-46, Gly-50, and Asn-52. N-linked (GlcNAc...) asparagine glycans are attached at residues Asn-193 and Asn-222. (R)-lactate is bound by residues Tyr-242, Tyr-258, and Arg-305. 3 residues coordinate anthranilate: Tyr-242, Tyr-258, and Arg-305. Positions 305, 332, 335, 336, and 337 each coordinate FAD. The short motif at 359 to 361 (SKL) is the Microbody targeting signal element.

Belongs to the DAMOX/DASOX family. Requires FAD as cofactor. Post-translationally, the N-terminus is blocked.

It is found in the peroxisome matrix. It carries out the reaction a D-alpha-amino acid + O2 + H2O = a 2-oxocarboxylate + H2O2 + NH4(+). Its function is as follows. Catalyzes the oxidative deamination of D-amino acids with broad substrate specificity. Enables the organism to utilize D-amino acids as a source of nutrients. The polypeptide is D-amino-acid oxidase (Fusarium vanettenii (Neocosmospora pisi)).